The sequence spans 347 residues: Ornithine transcarbamylase, mitochondrial (347 aa).

The N-terminal 25 residues, 1-25 (MINSISNTVLLKSVVSKRFFSSSAK), are a transit peptide targeting the mitochondrion. Carbamoyl phosphate contacts are provided by residues 84–87 (STRT), R135, H162, and Q165. Positions 194, 258, 262, and 263 each coordinate L-ornithine. The active-site Proton acceptor is the C300. Residues 300–301 (CL) and R328 contribute to the carbamoyl phosphate site.

It belongs to the aspartate/ornithine carbamoyltransferase superfamily. OTCase family.

Its subcellular location is the mitochondrion matrix. It catalyses the reaction carbamoyl phosphate + L-ornithine = L-citrulline + phosphate + H(+). The protein operates within amino-acid biosynthesis; L-arginine biosynthesis; L-arginine from L-ornithine and carbamoyl phosphate: step 1/3. The chain is Ornithine transcarbamylase, mitochondrial (OTC) from Pachysolen tannophilus (Yeast).